The primary structure comprises 1166 residues: Tectonin beta-propeller repeat-containing protein 1 (1166 aa).

TECPR repeat units lie at residues 209 to 240, 254 to 285, 301 to 332, and 344 to 376; these read LSVWAVSLQGKVWYRENVSHPNPEGSSWSLVD, DLIWATLWEGQALVREGICRNNPKGNSWSIVE, SVVWAITKDRKVWFRRGVNSHNPCGTSWIEMV, and DQVWGISCEDRAVYFRQGVTPSELSGKTWKAIV. Ser-386, Ser-388, Ser-391, Ser-413, and Ser-418 each carry phosphoserine. The segment at 403–492 is disordered; the sequence is VRGSGTESAP…PAPTPAELPW (90 aa). Polar residues predominate over residues 407-418; it reads GTESAPSDTDAS. Residues 420–436 show a composition bias toward basic and acidic residues; that stretch reads EVERQGPERSLPKESLD. Residues 437–446 show a composition bias toward polar residues; the sequence is NSRNLKGSSS. Positions 447 to 456 are enriched in basic and acidic residues; the sequence is KGHESTRNTE. The PH domain occupies 616–722; that stretch reads KTGALQWWCD…WLTLLSLSCC (107 aa). A TECPR 5 repeat occupies 734 to 761; sequence QAIWSVTCKGDIFVSEPSPDLEAHEHLL. Phosphoserine is present on Ser-943. 4 TECPR repeats span residues 958–989, 1003–1034, 1049–1080, and 1092–1132; these read IALWAVSDKGDVLCRLGVSELNPAGSSWLHVG, YQVWAVARDGSAFYRGSVSPSQPAGDCWYHIP, TSVYALDENGNLWYRAGITPSYPQGSSWEHVS, and DQVW…DYGI. Residues 1147 to 1166 form a disordered region; that stretch reads RAPRNMSRDQEAHGPGPVCC.

The protein belongs to the TECPR1 family. Interacts with ATG5; the interaction is direct. Interacts with WIPI2. Interacts with the ATG5-ATG12 conjugate, the interaction is however mutually exclusive with ATG16, since it does not interact with ATG12-ATG5-ATG16 complex.

It is found in the cytoplasmic vesicle. It localises to the autophagosome membrane. The protein localises to the lysosome membrane. Functionally, tethering factor involved in autophagy. Involved in autophagosome maturation by promoting the autophagosome fusion with lysosomes: acts by associating with both the ATG5-ATG12 conjugate and phosphatidylinositol-3-phosphate (PtdIns(3)P) present at the surface of autophagosomes. Also involved in selective autophagy against bacterial pathogens, by being required for phagophore/preautophagosomal structure biogenesis and maturation. This chain is Tectonin beta-propeller repeat-containing protein 1 (Tecpr1), found in Rattus norvegicus (Rat).